The sequence spans 349 residues: Magnesium-protoporphyrin IX monomethyl ester [oxidative] cyclase (349 aa).

It belongs to the AcsF family. The cofactor is Fe cation.

The protein localises to the plastid. It localises to the chloroplast. The enzyme catalyses Mg-protoporphyrin IX 13-monomethyl ester + 3 NADPH + 3 O2 + 2 H(+) = 3,8-divinyl protochlorophyllide a + 3 NADP(+) + 5 H2O. Its pathway is porphyrin-containing compound metabolism; chlorophyll biosynthesis (light-independent). In terms of biological role, catalyzes the formation of the isocyclic ring in chlorophyll biosynthesis. Mediates the cyclase reaction, which results in the formation of divinylprotochlorophyllide (Pchlide) characteristic of all chlorophylls from magnesium-protoporphyrin IX 13-monomethyl ester (MgPMME). The sequence is that of Magnesium-protoporphyrin IX monomethyl ester [oxidative] cyclase from Pyropia yezoensis (Susabi-nori).